Consider the following 446-residue polypeptide: tRNA modification GTPase MnmE (446 aa).

(6S)-5-formyl-5,6,7,8-tetrahydrofolate contacts are provided by arginine 24, glutamate 81, and lysine 120. Positions 216 to 368 constitute a TrmE-type G domain; that stretch reads GLHAVLIGPP…LHTRLRELAL (153 aa). Asparagine 226 provides a ligand contact to K(+). GTP contacts are provided by residues 226 to 231, 245 to 251, and 270 to 273; these read NAGKSS, TDVAGTT, and DTAG. Serine 230 is a binding site for Mg(2+). K(+) is bound by residues threonine 245, valine 247, and threonine 250. Threonine 251 is a Mg(2+) binding site. Lysine 446 provides a ligand contact to (6S)-5-formyl-5,6,7,8-tetrahydrofolate.

This sequence belongs to the TRAFAC class TrmE-Era-EngA-EngB-Septin-like GTPase superfamily. TrmE GTPase family. In terms of assembly, homodimer. Heterotetramer of two MnmE and two MnmG subunits. Requires K(+) as cofactor.

The protein localises to the cytoplasm. Functionally, exhibits a very high intrinsic GTPase hydrolysis rate. Involved in the addition of a carboxymethylaminomethyl (cmnm) group at the wobble position (U34) of certain tRNAs, forming tRNA-cmnm(5)s(2)U34. The polypeptide is tRNA modification GTPase MnmE (Xanthomonas campestris pv. campestris (strain B100)).